We begin with the raw amino-acid sequence, 59 residues long: Large ribosomal subunit protein uL30 (59 aa).

Belongs to the universal ribosomal protein uL30 family. Part of the 50S ribosomal subunit.

This Acetivibrio thermocellus (strain ATCC 27405 / DSM 1237 / JCM 9322 / NBRC 103400 / NCIMB 10682 / NRRL B-4536 / VPI 7372) (Clostridium thermocellum) protein is Large ribosomal subunit protein uL30.